Reading from the N-terminus, the 226-residue chain is Probable C4-dicarboxylate response regulator DctR (226 aa).

Positions 7 to 123 (KVLLIEDDPM…RMRQALEKYK (117 aa)) constitute a Response regulatory domain. A 4-aspartylphosphate modification is found at Asp58. A DNA-binding region (H-T-H motif) is located at residues 179–198 (AEEVAKALGIARVTARRYLD).

In terms of processing, phosphorylated by DctS.

The protein resides in the cytoplasm. Member of the two-component regulatory system DctS/DctR. Essential for expression of dctP. This Bacillus subtilis (strain 168) protein is Probable C4-dicarboxylate response regulator DctR (dctR).